The chain runs to 358 residues: UDP-N-acetylglucosamine--N-acetylmuramyl-(pentapeptide) pyrophosphoryl-undecaprenol N-acetylglucosamine transferase (358 aa).

UDP-N-acetyl-alpha-D-glucosamine-binding positions include 11–13, asparagine 120, arginine 161, serine 188, and glutamine 282; that span reads TGG.

Belongs to the glycosyltransferase 28 family. MurG subfamily.

It is found in the cell inner membrane. The enzyme catalyses di-trans,octa-cis-undecaprenyl diphospho-N-acetyl-alpha-D-muramoyl-L-alanyl-D-glutamyl-meso-2,6-diaminopimeloyl-D-alanyl-D-alanine + UDP-N-acetyl-alpha-D-glucosamine = di-trans,octa-cis-undecaprenyl diphospho-[N-acetyl-alpha-D-glucosaminyl-(1-&gt;4)]-N-acetyl-alpha-D-muramoyl-L-alanyl-D-glutamyl-meso-2,6-diaminopimeloyl-D-alanyl-D-alanine + UDP + H(+). Its pathway is cell wall biogenesis; peptidoglycan biosynthesis. Cell wall formation. Catalyzes the transfer of a GlcNAc subunit on undecaprenyl-pyrophosphoryl-MurNAc-pentapeptide (lipid intermediate I) to form undecaprenyl-pyrophosphoryl-MurNAc-(pentapeptide)GlcNAc (lipid intermediate II). This chain is UDP-N-acetylglucosamine--N-acetylmuramyl-(pentapeptide) pyrophosphoryl-undecaprenol N-acetylglucosamine transferase, found in Parasynechococcus marenigrum (strain WH8102).